The primary structure comprises 75 residues: Small ribosomal subunit protein bS18 (75 aa).

This sequence belongs to the bacterial ribosomal protein bS18 family. In terms of assembly, part of the 30S ribosomal subunit. Forms a tight heterodimer with protein bS6.

Binds as a heterodimer with protein bS6 to the central domain of the 16S rRNA, where it helps stabilize the platform of the 30S subunit. The polypeptide is Small ribosomal subunit protein bS18 (Paracoccus denitrificans (strain Pd 1222)).